The following is a 701-amino-acid chain: A-type ATP synthase subunit I (701 aa).

A run of 10 helical transmembrane segments spans residues 340–360 (WEIS…GLMF), 363–379 (FGNA…FYRY), 388–408 (IPKL…TGLL), 435–455 (LYNL…LLPF), 468–488 (MIFS…LGVI), 498–518 (FLFL…FIFM), 555–575 (GIVW…AILV), 583–603 (WGSA…LLLL), 612–632 (VLVF…MAYL), and 649–669 (IIIL…VVFI).

This sequence belongs to the V-ATPase 116 kDa subunit family. As to quaternary structure, has multiple subunits with at least A(3), B(3), C, D, E, F, H, I and proteolipid K(x).

Its subcellular location is the cell membrane. Component of the A-type ATP synthase that produces ATP from ADP in the presence of a proton gradient across the membrane. The protein is A-type ATP synthase subunit I of Saccharolobus solfataricus (strain ATCC 35092 / DSM 1617 / JCM 11322 / P2) (Sulfolobus solfataricus).